Reading from the N-terminus, the 709-residue chain is Polyribonucleotide nucleotidyltransferase (709 aa).

D487 and D493 together coordinate Mg(2+). The 60-residue stretch at 554–613 (PRIHTMKISSDKIKDVIGKGGAVIRALCEETGTTIEIEDDGTIKIAATEGAAAKEAIRRI) folds into the KH domain. One can recognise an S1 motif domain in the interval 623 to 691 (GKIYTGKVMR…RQGRIRLSIK (69 aa)).

It belongs to the polyribonucleotide nucleotidyltransferase family. In terms of assembly, component of the RNA degradosome, which is a multiprotein complex involved in RNA processing and mRNA degradation. The cofactor is Mg(2+).

Its subcellular location is the cytoplasm. It catalyses the reaction RNA(n+1) + phosphate = RNA(n) + a ribonucleoside 5'-diphosphate. Functionally, involved in mRNA degradation. Catalyzes the phosphorolysis of single-stranded polyribonucleotides processively in the 3'- to 5'-direction. This Aliivibrio fischeri (strain ATCC 700601 / ES114) (Vibrio fischeri) protein is Polyribonucleotide nucleotidyltransferase.